The following is a 935-amino-acid chain: Formin-I (935 aa).

A coiled-coil region spans residues 35 to 76 (QQQQQQQQQQINNENENSINNQENKENNNKDNNNNNNKEIKQ). 3 disordered regions span residues 52–78 (SINN…KQSS), 380–511 (LSSA…QLTP), and 561–590 (KEKM…QSLS). Low complexity predominate over residues 384–407 (KKQPQQQPQKDVTSSSSSSSNSSS). The span at 418–428 (ITTNDSSSSNP) shows a compositional bias: polar residues. The span at 431–443 (DFDKLSLSSDDKV) shows a compositional bias: basic and acidic residues. Positions 444–454 (NNNNVQIENTT) are enriched in polar residues. Residues 444-505 (NNNNVQIENT…KPNNSGGGGG (62 aa)) form the FH1 domain. Residues 456–482 (SVPPPPPVGAPPPPPPPPPPPPPPPPS) show a composition bias toward pro residues. Polar residues predominate over residues 484–499 (LKLNRNRISTPKKPNN). Residues 506–935 (GGQLTPLQKK…SLNLSTLNSK (430 aa)) enclose the FH2 domain. A compositionally biased stretch (low complexity) spans 568–583 (NLNNSNNNNNNNSNNN). 2 coiled-coil regions span residues 702-730 (SLLD…FIKV) and 803-834 (QSSL…QQLL).

This sequence belongs to the formin homology family. Diaphanous subfamily.

Functionally, formins play an important role in the nucleation of actin and the formation of linear actin filaments. The sequence is that of Formin-I (forI) from Dictyostelium discoideum (Social amoeba).